Consider the following 216-residue polypeptide: MRFFIDTANVEDIKKAHQMGVIGGVTTNPSLVAKEGVDFHTRLREICEIVGDLSVSAEVIALDAPGMVEEGKELAAIAPNITVKVPMTPAGMEAVKQFKELGIKTNVTLIFNANQALLAARAGASYVSPFIGRLDDIGQDGLDLVETIANIFAIHGIETEIIAASVRHPVHVTKAALLGADIATVPYKVIEQMMKHPLTDKGIEQFLADWNNAQSK.

The active-site Schiff-base intermediate with substrate is the Lys-84.

The protein belongs to the transaldolase family. Type 3B subfamily.

Its subcellular location is the cytoplasm. The catalysed reaction is D-sedoheptulose 7-phosphate + D-glyceraldehyde 3-phosphate = D-erythrose 4-phosphate + beta-D-fructose 6-phosphate. It functions in the pathway carbohydrate degradation; pentose phosphate pathway; D-glyceraldehyde 3-phosphate and beta-D-fructose 6-phosphate from D-ribose 5-phosphate and D-xylulose 5-phosphate (non-oxidative stage): step 2/3. Its function is as follows. Transaldolase is important for the balance of metabolites in the pentose-phosphate pathway. The sequence is that of Probable transaldolase from Exiguobacterium sp. (strain ATCC BAA-1283 / AT1b).